The sequence spans 882 residues: DNA mismatch repair protein MutS (882 aa).

An ATP-binding site is contributed by 629–636 (GPNMGGKS).

This sequence belongs to the DNA mismatch repair MutS family.

This protein is involved in the repair of mismatches in DNA. It is possible that it carries out the mismatch recognition step. This protein has a weak ATPase activity. The sequence is that of DNA mismatch repair protein MutS from Ralstonia nicotianae (strain ATCC BAA-1114 / GMI1000) (Ralstonia solanacearum).